The sequence spans 259 residues: Tonin (259 aa).

The N-terminal stretch at 1 to 18 (MWLQILSLVLSVGRIDAA) is a signal peptide. Positions 19 to 24 (PPGQSR) are cleaved as a propeptide — activation peptide. One can recognise a Peptidase S1 domain in the interval 25–256 (IVGGYKCEKN…FTSWIKKVMK (232 aa)). 5 cysteine pairs are disulfide-bonded: Cys-31/Cys-171, Cys-48/Cys-64, Cys-150/Cys-217, Cys-182/Cys-196, and Cys-207/Cys-232. Residue His-63 is the Charge relay system of the active site. His-63 lines the Zn(2+) pocket. N-linked (GlcNAc...) asparagine glycosylation occurs at Asn-106. Zn(2+) contacts are provided by His-113 and His-115. Catalysis depends on Asp-118, which acts as the Charge relay system. N-linked (GlcNAc...) asparagine glycosylation is present at Asn-189. The Charge relay system role is filled by Ser-211.

This sequence belongs to the peptidase S1 family. Kallikrein subfamily. Monomer. The cofactor is Zn(2+). Found in submaxillary gland.

The catalysed reaction is Preferential cleavage of Arg-|-Xaa bonds in small molecule substrates. Highly selective action to release kallidin (lysyl-bradykinin) from kininogen involves hydrolysis of Met-|-Xaa or Leu-|-Xaa.. This protein has both trypsin- and chymotrypsin-like activities, being able to release angiotensin II from angiotensin I or angiotensinogen. This Rattus norvegicus (Rat) protein is Tonin (Klk2).